A 541-amino-acid polypeptide reads, in one-letter code: Protein VAPYRIN (541 aa).

An MSP domain is found at Leu4 to Val138. ANK repeat units lie at residues Gln176–Ala205, Val209–Gly238, Ser242–Ser271, Asp275–Val304, Glu309–Val338, Leu342–Ala372, Lys374–Gly392, Asn396–Ala425, Asp429–Ala458, and Lys462–Gly491.

In terms of assembly, interacts with EX70I at the periarbuscular membrane (PAM) around the arbuscule hyphal tips. Expressed in roots.

The protein localises to the cytoplasm. It is found in the nucleus. It localises to the cell membrane. In terms of biological role, required for arbuscular mycorrhizal (AM) symbiosis with AM fungi (e.g. Glomus versiforme and Gigaspora gigantea) both during fungal passage across root epidermis and for arbuscule formation in cortical cells; this symbiosis promotes phosphorus (P) and copper (Cu) uptake. Essential for infection by symbiotic nitrogen-fixing rhizobial bacteria (e.g. Sinorhizobium meliloti) leading to the formation of root nodules. The polypeptide is Protein VAPYRIN (Medicago truncatula (Barrel medic)).